Consider the following 65-residue polypeptide: MARGKEIRVTINPECINCFRDSGRRYRGISRYTTQKNRRNTPIRLELRKFCRYCGEHTIHKEMKK.

This sequence belongs to the bacterial ribosomal protein bL33 family.

The protein localises to the plastid. This chain is Large ribosomal subunit protein bL33c, found in Aneura mirabilis (Parasitic liverwort).